The following is a 112-amino-acid chain: MNNYEAVFILTPVLSDEQVKETVNKFKDILIAEEAEIINEENWGLRKLSYPIQRKTTGFYFLLEFKSDSTIISKLETQFRRDEKVLRFLTFRQNKVFMEYALKRRNKLKETK.

Belongs to the bacterial ribosomal protein bS6 family.

Its function is as follows. Binds together with bS18 to 16S ribosomal RNA. This chain is Small ribosomal subunit protein bS6, found in Azobacteroides pseudotrichonymphae genomovar. CFP2.